The following is a 441-amino-acid chain: Arginine biosynthesis bifunctional protein ArgJ, mitochondrial (441 aa).

Substrate is bound by residues Thr-177, Lys-203, Thr-214, Glu-303, Asn-436, and Ser-441. Catalysis depends on Thr-214, which acts as the Nucleophile.

It belongs to the ArgJ family. As to quaternary structure, heterodimer of an alpha and a beta chain. In terms of processing, the alpha and beta chains are autoproteolytically processed from a single precursor protein within the mitochondrion.

It localises to the mitochondrion matrix. The enzyme catalyses N(2)-acetyl-L-ornithine + L-glutamate = N-acetyl-L-glutamate + L-ornithine. The catalysed reaction is L-glutamate + acetyl-CoA = N-acetyl-L-glutamate + CoA + H(+). Its pathway is amino-acid biosynthesis; L-arginine biosynthesis; L-ornithine and N-acetyl-L-glutamate from L-glutamate and N(2)-acetyl-L-ornithine (cyclic): step 1/1. The protein operates within amino-acid biosynthesis; L-arginine biosynthesis; N(2)-acetyl-L-ornithine from L-glutamate: step 1/4. Catalyzes two activities which are involved in the cyclic version of arginine biosynthesis: the synthesis of acetylglutamate from glutamate and acetyl-CoA, and of ornithine by transacetylation between acetylornithine and glutamate. This chain is Arginine biosynthesis bifunctional protein ArgJ, mitochondrial, found in Debaryomyces hansenii (strain ATCC 36239 / CBS 767 / BCRC 21394 / JCM 1990 / NBRC 0083 / IGC 2968) (Yeast).